Here is a 259-residue protein sequence, read N- to C-terminus: Phosphatidylglycerol--prolipoprotein diacylglyceryl transferase (259 aa).

The next 4 membrane-spanning stretches (helical) occupy residues 10 to 30 (IGLLEIRWYSLAYIIGILFAY), 50 to 70 (IISWWVTGMILGGRIGYILFY), 86 to 106 (WKGGMSFHGASLGLFCTMYIF), and 112 to 132 (IKFLSAIDLCLCAVPVGIFLG). Residue Arg-133 participates in a 1,2-diacyl-sn-glycero-3-phospho-(1'-sn-glycerol) binding. Helical transmembrane passes span 169 to 189 (LYEAFFEGLLLFVVMNLLFFF), 197 to 217 (GMLFSIFMIWYGIVRFFIEFV), and 227 to 247 (ILFNWITMGQLLSFIMVILGI).

It belongs to the Lgt family.

The protein resides in the cell inner membrane. The catalysed reaction is L-cysteinyl-[prolipoprotein] + a 1,2-diacyl-sn-glycero-3-phospho-(1'-sn-glycerol) = an S-1,2-diacyl-sn-glyceryl-L-cysteinyl-[prolipoprotein] + sn-glycerol 1-phosphate + H(+). It participates in protein modification; lipoprotein biosynthesis (diacylglyceryl transfer). Catalyzes the transfer of the diacylglyceryl group from phosphatidylglycerol to the sulfhydryl group of the N-terminal cysteine of a prolipoprotein, the first step in the formation of mature lipoproteins. The protein is Phosphatidylglycerol--prolipoprotein diacylglyceryl transferase of Ehrlichia ruminantium (strain Welgevonden).